Reading from the N-terminus, the 262-residue chain is Hydroxyethylthiazole kinase (262 aa).

Met-44 serves as a coordination point for substrate. Positions 118 and 166 each coordinate ATP. Gly-193 lines the substrate pocket.

The protein belongs to the Thz kinase family. It depends on Mg(2+) as a cofactor.

The enzyme catalyses 5-(2-hydroxyethyl)-4-methylthiazole + ATP = 4-methyl-5-(2-phosphooxyethyl)-thiazole + ADP + H(+). The protein operates within cofactor biosynthesis; thiamine diphosphate biosynthesis; 4-methyl-5-(2-phosphoethyl)-thiazole from 5-(2-hydroxyethyl)-4-methylthiazole: step 1/1. Its function is as follows. Catalyzes the phosphorylation of the hydroxyl group of 4-methyl-5-beta-hydroxyethylthiazole (THZ). The chain is Hydroxyethylthiazole kinase from Chlamydia abortus (strain DSM 27085 / S26/3) (Chlamydophila abortus).